Consider the following 240-residue polypeptide: Transcriptional regulatory protein ChvI (240 aa).

Positions 3–116 (TIALVDDDRN…LLVERVKAIL (114 aa)) constitute a Response regulatory domain. 3 residues coordinate Mg(2+): aspartate 8, aspartate 9, and aspartate 52. A 4-aspartylphosphate modification is found at aspartate 52. A DNA-binding region (ompR/PhoB-type) is located at residues 139–238 (SRSLERGQLV…LYGVGYRFRE (100 aa)).

The cofactor is Mg(2+). Phosphorylated by ChvG.

It localises to the cytoplasm. It participates in glycan metabolism; exopolysaccharide biosynthesis. Its function is as follows. Member of a two-component regulatory system ChvG(ExoS)/ChvI involved in regulating the production of succinoglycan. The sequence is that of Transcriptional regulatory protein ChvI (chvI) from Rhizobium meliloti (strain 1021) (Ensifer meliloti).